Here is an 807-residue protein sequence, read N- to C-terminus: MKYDFSALEKKWQARWADEQTFASSADQDKPKYYVLDMFPYPSGSGLHVGHLEGYTATDIMARYKRCQGHNVLHPMGWDAFGLPAEQFAIKTGTHPRLTTEKNVASFRETLKSMGFSYDWSREVNTTDPNYFKWTQWIFLKLYEKGLAYISEVDVNWCEELKVVLANEEVDEKIADGYTVVRRPLRQWVLKITAYAERLLEDLDEVDWPENVKQMQRNWIGRSEGVEIDFELRCHRTNLRVYTTRPDTLFGATYLVISPEHPMAEKLAIAQQLVEVKKYIEQAKLKTELERTGLQKEKTGVFTGSYAINPANGEALPVWISDFVLTSYGTGAIMSVPAHDSRDWEFAKKFGLPIREVIKSPHDVQEEVFDGKESVCVNSANDEISIDGLDFKTAFDRMATWLESKGKGKRKVNYKLRDWVFSRQRYWGEPIPIKHYEDGTMRPETNLPLTLPEVEAYHPTSTGESPLANIESWLYGEDEHGKFRRETNTMPQWAGSCWYYLRFIDPQNGNALVDPSREQYWMNVDLYIGGAEHAVLHLLYSRFWHKVLYDLGVVSTKEPFQRLFNQGMILGEDNEKMSKSRGNVIPADHVLSTYGADAVRLYEMFLGPLEQVKPWNTHGIEGISRFLNKVWRLVWDENTETQKTTDDKPSEAVLKRMHKAIKKVTEDTEQLKFNTAISEMMVLVNELTKTGCYSRETTETLLVLLSPFAPHITEELWQTLGHTESISGAVWPVFDAKLATDDVLTIAVQVNGKLRGTFEAPAGYAKEDMIESAKKVESVAKFLEGQQIIKEIAVPGKLVNFAVKPQQ.

Positions 40-51 (PYPSGSGLHVGH) match the 'HIGH' region motif. The short motif at 576-580 (KMSKS) is the 'KMSKS' region element. Lysine 579 provides a ligand contact to ATP.

Belongs to the class-I aminoacyl-tRNA synthetase family.

It is found in the cytoplasm. It catalyses the reaction tRNA(Leu) + L-leucine + ATP = L-leucyl-tRNA(Leu) + AMP + diphosphate. This chain is Leucine--tRNA ligase, found in Chlorobaculum parvum (strain DSM 263 / NCIMB 8327) (Chlorobium vibrioforme subsp. thiosulfatophilum).